The following is a 154-amino-acid chain: Protein AE7-like 1 (154 aa).

This sequence belongs to the MIP18 family.

In terms of biological role, may play a role in chromosome segregation through establishment of sister chromatid cohesion. Unable to complement ae7 mutants, and thus probably not involved in the cytosolic iron-sulfur assembly (CIA) pathway. The polypeptide is Protein AE7-like 1 (Arabidopsis thaliana (Mouse-ear cress)).